A 633-amino-acid polypeptide reads, in one-letter code: DNA mismatch repair protein MutL (633 aa).

Disordered stretches follow at residues 337–364 (RPDD…GEFG) and 383–405 (VGWS…TRPE). Residues 385 to 396 (WSGGSSASGGSS) are compositionally biased toward gly residues.

Belongs to the DNA mismatch repair MutL/HexB family.

Functionally, this protein is involved in the repair of mismatches in DNA. It is required for dam-dependent methyl-directed DNA mismatch repair. May act as a 'molecular matchmaker', a protein that promotes the formation of a stable complex between two or more DNA-binding proteins in an ATP-dependent manner without itself being part of a final effector complex. This is DNA mismatch repair protein MutL from Pseudomonas aeruginosa (strain LESB58).